We begin with the raw amino-acid sequence, 1341 residues long: DNA-directed RNA polymerase subunit beta (1341 aa).

Belongs to the RNA polymerase beta chain family. As to quaternary structure, the RNAP catalytic core consists of 2 alpha, 1 beta, 1 beta' and 1 omega subunit. When a sigma factor is associated with the core the holoenzyme is formed, which can initiate transcription.

The enzyme catalyses RNA(n) + a ribonucleoside 5'-triphosphate = RNA(n+1) + diphosphate. In terms of biological role, DNA-dependent RNA polymerase catalyzes the transcription of DNA into RNA using the four ribonucleoside triphosphates as substrates. The sequence is that of DNA-directed RNA polymerase subunit beta from Blochmanniella pennsylvanica (strain BPEN).